Here is a 247-residue protein sequence, read N- to C-terminus: Adenosine 5'-phosphosulfate reductase (247 aa).

The [4Fe-4S] cluster site is built by cysteine 133, cysteine 134, cysteine 216, and cysteine 219. Positions lysine 222 to serine 247 are disordered. Cysteine 242 (nucleophile; cysteine thiosulfonate intermediate) is an active-site residue.

This sequence belongs to the PAPS reductase family. CysH subfamily. It depends on [4Fe-4S] cluster as a cofactor.

It is found in the cytoplasm. It carries out the reaction [thioredoxin]-disulfide + sulfite + AMP + 2 H(+) = adenosine 5'-phosphosulfate + [thioredoxin]-dithiol. Its pathway is sulfur metabolism; hydrogen sulfide biosynthesis; sulfite from sulfate. Catalyzes the formation of sulfite from adenosine 5'-phosphosulfate (APS) using thioredoxin as an electron donor. This chain is Adenosine 5'-phosphosulfate reductase, found in Rhodococcus opacus (strain B4).